Here is a 540-residue protein sequence, read N- to C-terminus: Glucose-6-phosphate isomerase (540 aa).

The active-site Proton donor is the glutamate 350. Active-site residues include histidine 381 and lysine 503.

The protein belongs to the GPI family.

It is found in the cytoplasm. It catalyses the reaction alpha-D-glucose 6-phosphate = beta-D-fructose 6-phosphate. The protein operates within carbohydrate biosynthesis; gluconeogenesis. It participates in carbohydrate degradation; glycolysis; D-glyceraldehyde 3-phosphate and glycerone phosphate from D-glucose: step 2/4. Its function is as follows. Catalyzes the reversible isomerization of glucose-6-phosphate to fructose-6-phosphate. The protein is Glucose-6-phosphate isomerase of Burkholderia multivorans (strain ATCC 17616 / 249).